Here is a 610-residue protein sequence, read N- to C-terminus: Elongation factor 4 (610 aa).

The tr-type G domain occupies 11–193; the sequence is QRIRNFSIVA…KIVQDIPAPT (183 aa). Residues 23 to 28 and 140 to 143 contribute to the GTP site; these read DHGKST and NKVD.

It belongs to the TRAFAC class translation factor GTPase superfamily. Classic translation factor GTPase family. LepA subfamily.

It is found in the cell membrane. The catalysed reaction is GTP + H2O = GDP + phosphate + H(+). Functionally, required for accurate and efficient protein synthesis under certain stress conditions. May act as a fidelity factor of the translation reaction, by catalyzing a one-codon backward translocation of tRNAs on improperly translocated ribosomes. Back-translocation proceeds from a post-translocation (POST) complex to a pre-translocation (PRE) complex, thus giving elongation factor G a second chance to translocate the tRNAs correctly. Binds to ribosomes in a GTP-dependent manner. The polypeptide is Elongation factor 4 (Limosilactobacillus fermentum (strain NBRC 3956 / LMG 18251) (Lactobacillus fermentum)).